A 423-amino-acid polypeptide reads, in one-letter code: Probable sucrose-phosphatase 1 (423 aa).

It belongs to the sucrose phosphatase family. Homodimer. Mg(2+) is required as a cofactor.

It catalyses the reaction sucrose 6(F)-phosphate + H2O = sucrose + phosphate. It functions in the pathway glycan biosynthesis; sucrose biosynthesis; sucrose from D-fructose 6-phosphate and UDP-alpha-D-glucose: step 2/2. Catalyzes the final step of sucrose synthesis. This is Probable sucrose-phosphatase 1 (SPP1) from Arabidopsis thaliana (Mouse-ear cress).